We begin with the raw amino-acid sequence, 509 residues long: MSTDTIPSLSSPPAPEFPSTTPDTATSPAPSQPSIIGPSSLAPFPETTTNIDGGSRNVALTGLITGVVLGATFVLLGVCIFVCFYKRKKRKLKKKKKEDIEASINRDSLDPKDDSNNLQQWSSSEIGQNLFTYEDLSKATSNFSNTNLLGQGGFGYVHRGVLVDGTLVAIKQLKSGSGQGEREFQAEIQTISRVHHRHLVSLLGYCITGAQRLLVYEFVPNKTLEFHLHEKERPVMEWSKRMKIALGAAKGLAYLHEDCNPKTIHRDVKAANILIDDSYEAKLADFGLARSSLDTDTHVSTRIMGTFGYLAPEYASSGKLTEKSDVFSIGVVLLELITGRRPVDKSQPFADDDSIVDWAKPLMIQALNDGNFDGLVDPRLENDFDINEMTRMVACAAASVRHSAKRRPKMSQIVRAFEGNISIDDLTEGAAPGQSTIYSLDGSSDYSSTQYKEDLKKFKKMAFESKTFGSSECSGLTSDNGQNPSGSSSITEGQRTTQEIEPEKNTKDT.

Residues 1–44 (MSTDTIPSLSSPPAPEFPSTTPDTATSPAPSQPSIIGPSSLAPF) form a disordered region. Topologically, residues 1–61 (MSTDTIPSLS…DGGSRNVALT (61 aa)) are extracellular. Low complexity predominate over residues 18–34 (PSTTPDTATSPAPSQPS). The chain crosses the membrane as a helical span at residues 62–82 (GLITGVVLGATFVLLGVCIFV). The Cytoplasmic portion of the chain corresponds to 83–509 (CFYKRKKRKL…IEPEKNTKDT (427 aa)). Threonine 132 bears the Phosphothreonine mark. The region spanning 143–423 (FSNTNLLGQG…VRAFEGNISI (281 aa)) is the Protein kinase domain. ATP-binding positions include 149–157 (LGQGGFGYV) and lysine 171. Tyrosine 216 carries the post-translational modification Phosphotyrosine. The Proton acceptor role is filled by aspartate 267. A Phosphoserine modification is found at serine 300. Phosphothreonine occurs at positions 301 and 306. Tyrosine 314 is modified (phosphotyrosine). The segment covering 468–499 (FGSSECSGLTSDNGQNPSGSSSITEGQRTTQE) has biased composition (polar residues). Residues 468–509 (FGSSECSGLTSDNGQNPSGSSSITEGQRTTQEIEPEKNTKDT) form a disordered region.

The protein belongs to the protein kinase superfamily. Ser/Thr protein kinase family. Mostly expressed in inflorescence bolts, and, to a lower extent, in flower buds and siliques.

The protein resides in the cell membrane. The catalysed reaction is L-seryl-[protein] + ATP = O-phospho-L-seryl-[protein] + ADP + H(+). It catalyses the reaction L-threonyl-[protein] + ATP = O-phospho-L-threonyl-[protein] + ADP + H(+). This Arabidopsis thaliana (Mouse-ear cress) protein is Proline-rich receptor-like protein kinase PERK15 (PERK15).